A 773-amino-acid chain; its full sequence is Subtilisin-like protease SBT3.4 (773 aa).

The first 23 residues, 1-23 (MRNFRSSVLVVLSLIIVLNVARA), serve as a signal peptide directing secretion. A propeptide spans 24-108 (SAKSKVHIVY…VIPDSYYELA (85 aa)) (activation peptide). The Inhibitor I9 domain occupies 29–108 (VHIVYLGEKQ…VIPDSYYELA (80 aa)). The region spanning 112 to 620 (IWDYLGPSAD…GGLVNPEKAA (509 aa)) is the Peptidase S8 domain. The active-site Charge relay system is D142. N200 carries an N-linked (GlcNAc...) asparagine glycan. The active-site Charge relay system is H216. N-linked (GlcNAc...) asparagine glycosylation is found at N231, N408, and N536. Residues 382–474 (SLVYPEDPGN…IDNELGTDIL (93 aa)) enclose the PA domain. The active-site Charge relay system is the S551. N-linked (GlcNAc...) asparagine glycosylation occurs at N643.

Belongs to the peptidase S8 family.

It is found in the secreted. This chain is Subtilisin-like protease SBT3.4, found in Arabidopsis thaliana (Mouse-ear cress).